Reading from the N-terminus, the 274-residue chain is Octanoyl-[GcvH]:protein N-octanoyltransferase (274 aa).

The BPL/LPL catalytic domain maps to 37-242 (QGNDAVVRTW…AMKTLGATLS (206 aa)). C141 acts as the Acyl-thioester intermediate in catalysis.

Belongs to the octanoyltransferase LipL family.

It carries out the reaction N(6)-octanoyl-L-lysyl-[glycine-cleavage complex H protein] + L-lysyl-[lipoyl-carrier protein] = N(6)-octanoyl-L-lysyl-[lipoyl-carrier protein] + L-lysyl-[glycine-cleavage complex H protein]. It functions in the pathway protein modification; protein lipoylation via endogenous pathway; protein N(6)-(lipoyl)lysine from octanoyl-[acyl-carrier-protein]. Catalyzes the amidotransfer (transamidation) of the octanoyl moiety from octanoyl-GcvH to the lipoyl domain of the E2 subunit of lipoate-dependent enzymes. This Macrococcus caseolyticus (strain JCSC5402) (Macrococcoides caseolyticum) protein is Octanoyl-[GcvH]:protein N-octanoyltransferase.